The sequence spans 347 residues: Anthranilate phosphoribosyltransferase (347 aa).

5-phospho-alpha-D-ribose 1-diphosphate-binding positions include glycine 88, 91-92 (GD), threonine 96, 98-101 (NIST), 116-124 (KHGNRSVSS), and serine 128. Position 88 (glycine 88) interacts with anthranilate. Serine 100 provides a ligand contact to Mg(2+). Asparagine 119 is a binding site for anthranilate. Arginine 174 is an anthranilate binding site. 2 residues coordinate Mg(2+): aspartate 232 and glutamate 233.

Belongs to the anthranilate phosphoribosyltransferase family. In terms of assembly, homodimer. It depends on Mg(2+) as a cofactor.

It carries out the reaction N-(5-phospho-beta-D-ribosyl)anthranilate + diphosphate = 5-phospho-alpha-D-ribose 1-diphosphate + anthranilate. It functions in the pathway amino-acid biosynthesis; L-tryptophan biosynthesis; L-tryptophan from chorismate: step 2/5. Its function is as follows. Catalyzes the transfer of the phosphoribosyl group of 5-phosphorylribose-1-pyrophosphate (PRPP) to anthranilate to yield N-(5'-phosphoribosyl)-anthranilate (PRA). This Shewanella oneidensis (strain ATCC 700550 / JCM 31522 / CIP 106686 / LMG 19005 / NCIMB 14063 / MR-1) protein is Anthranilate phosphoribosyltransferase.